The sequence spans 207 residues: 2,3-bisphosphoglycerate-dependent phosphoglycerate mutase (207 aa).

Residues 10–17 (RHGQSEWN), 23–24 (TG), Arg62, 89–92 (ERDY), Lys100, 116–117 (RR), and 160–161 (GN) contribute to the substrate site. The Tele-phosphohistidine intermediate role is filled by His11. Catalysis depends on Glu89, which acts as the Proton donor/acceptor.

It belongs to the phosphoglycerate mutase family. BPG-dependent PGAM subfamily. In terms of assembly, homodimer.

The catalysed reaction is (2R)-2-phosphoglycerate = (2R)-3-phosphoglycerate. The protein operates within carbohydrate degradation; glycolysis; pyruvate from D-glyceraldehyde 3-phosphate: step 3/5. Its function is as follows. Catalyzes the interconversion of 2-phosphoglycerate and 3-phosphoglycerate. This is 2,3-bisphosphoglycerate-dependent phosphoglycerate mutase from Afipia carboxidovorans (strain ATCC 49405 / DSM 1227 / KCTC 32145 / OM5) (Oligotropha carboxidovorans).